Here is a 112-residue protein sequence, read N- to C-terminus: Integration host factor subunit alpha (112 aa).

This sequence belongs to the bacterial histone-like protein family. As to quaternary structure, heterodimer of an alpha and a beta chain.

Its function is as follows. This protein is one of the two subunits of integration host factor, a specific DNA-binding protein that functions in genetic recombination as well as in transcriptional and translational control. This Rhizobium etli (strain ATCC 51251 / DSM 11541 / JCM 21823 / NBRC 15573 / CFN 42) protein is Integration host factor subunit alpha.